Here is a 204-residue protein sequence, read N- to C-terminus: MVCGGFACSKNCLCALNLLYTLVSLLLIGIAAWGIGFGLISSLRVVGVVIAVGIFLFLIALVGLIGAVKHHQVLLFFYMIILLLVFIVQFSVSCACLALNQEQQAQLLEVGWNNTASARDDIQRNLNCCGFRSFNPNDTCLASCVKSSHPCSPCAPIIGRYAGEVLRFVGGIGLFFSFTEILGVWLTYRYRNQKDPRANPSAFL.

The Cytoplasmic segment spans residues 1–19; the sequence is MVCGGFACSKNCLCALNLL. A helical transmembrane segment spans residues 20–40; the sequence is YTLVSLLLIGIAAWGIGFGLI. Residues 41-44 are Extracellular-facing; sequence SSLR. Residues 45 to 65 form a helical membrane-spanning segment; it reads VVGVVIAVGIFLFLIALVGLI. Residues 66–72 are Cytoplasmic-facing; it reads GAVKHHQ. The chain crosses the membrane as a helical span at residues 73 to 93; it reads VLLFFYMIILLLVFIVQFSVS. Residues 94-167 lie on the Extracellular side of the membrane; that stretch reads CACLALNQEQ…IGRYAGEVLR (74 aa). Residues Asn-113 and Asn-137 are each glycosylated (N-linked (GlcNAc...) asparagine). Ser-143 is subject to Phosphoserine. Residues 168–188 form a helical membrane-spanning segment; that stretch reads FVGGIGLFFSFTEILGVWLTY. The Cytoplasmic segment spans residues 189–204; the sequence is RYRNQKDPRANPSAFL.

It belongs to the tetraspanin (TM4SF) family.

It is found in the membrane. This chain is Tetraspanin-13 (TSPAN13), found in Bos taurus (Bovine).